The primary structure comprises 70 residues: UPF0270 protein VS_2853 (70 aa).

It belongs to the UPF0270 family.

This Vibrio atlanticus (strain LGP32) (Vibrio splendidus (strain Mel32)) protein is UPF0270 protein VS_2853.